We begin with the raw amino-acid sequence, 329 residues long: GTP 3',8-cyclase (329 aa).

In terms of domain architecture, Radical SAM core spans 8–234 (AFARKFYYLR…QLRQRSDGPA (227 aa)). R17 provides a ligand contact to GTP. [4Fe-4S] cluster-binding residues include C24 and C28. Y30 contacts S-adenosyl-L-methionine. C31 is a binding site for [4Fe-4S] cluster. R68 lines the GTP pocket. G72 is a binding site for S-adenosyl-L-methionine. T99 contacts GTP. An S-adenosyl-L-methionine-binding site is contributed by S123. A GTP-binding site is contributed by K160. M194 is an S-adenosyl-L-methionine binding site. C257 and C260 together coordinate [4Fe-4S] cluster. 262 to 264 (RLR) contributes to the GTP binding site. C274 contacts [4Fe-4S] cluster.

The protein belongs to the radical SAM superfamily. MoaA family. In terms of assembly, monomer and homodimer. Requires [4Fe-4S] cluster as cofactor.

The enzyme catalyses GTP + AH2 + S-adenosyl-L-methionine = (8S)-3',8-cyclo-7,8-dihydroguanosine 5'-triphosphate + 5'-deoxyadenosine + L-methionine + A + H(+). The protein operates within cofactor biosynthesis; molybdopterin biosynthesis. Catalyzes the cyclization of GTP to (8S)-3',8-cyclo-7,8-dihydroguanosine 5'-triphosphate. The sequence is that of GTP 3',8-cyclase from Escherichia coli (strain K12 / MC4100 / BW2952).